Consider the following 1212-residue polypeptide: uncharacterized protein (1212 aa).

Residues 1 to 31 show a composition bias toward polar residues; sequence MASIQTKLVSQPQTQQPLQNGFFNNYQQNIY. Disordered regions lie at residues 1–70, 119–169, 211–231, 248–374, 655–681, 935–957, and 973–1125; these read MASI…HLQQ, PQAQ…FGTN, SLNNSLNSSGNNSTLNTSNNN, INIG…NNNK, QQQPQQLNQNPPNQQLPQQPNQITQQQ, NQNQNNNNNNNNNNNNNINCNNA, and QLQP…QQLQ. Composition is skewed to low complexity over residues 48-70 and 119-163; these read PQQQPILPQQPQPQSQQPLHLQQ and PQAQ…NNNN. Positions 256 to 275 are enriched in low complexity; the sequence is NNSNTNNVNNINTNNTNNNN. Composition is skewed to polar residues over residues 276-285 and 292-317; these read KSGSIDQFGS and YVNSSSNSAIPTPPTNQTNGSNSHSP. A compositionally biased stretch (low complexity) spans 322–340; that stretch reads INSNININSNLQSPQNIQQ. Over residues 341 to 351 the composition is skewed to polar residues; sequence TILSPNISPNH. Positions 352–373 are enriched in low complexity; the sequence is NNNNNNNNNNNNNNNNNNNNNN. Composition is skewed to low complexity over residues 998–1022 and 1037–1125; these read NSVNNNINNNFINNNSFVNNNNNNN and QNNN…QQLQ.

This is an uncharacterized protein from Dictyostelium discoideum (Social amoeba).